The sequence spans 378 residues: Cysteine endopeptidase RepA (378 aa).

The N-terminal stretch at 1–24 is a signal peptide; sequence MLRCFLVAAAAVALAAAAAAPARA. The propeptide at 25–141 is activation peptide; sequence IPFTESDLSS…SFRYGGDDED (117 aa). Intrachain disulfides connect cysteine 164/cysteine 206, cysteine 198/cysteine 239, and cysteine 297/cysteine 350. Cysteine 167 is an active-site residue. Catalysis depends on residues histidine 303 and asparagine 324.

This sequence belongs to the peptidase C1 family.

The protein resides in the protein storage vacuole. Cysteine endopeptidase that digests in vitro both the acidic and basic subunits of glutelin, the major seed storage protein of rice. The protein is Cysteine endopeptidase RepA of Oryza sativa subsp. japonica (Rice).